The following is a 265-amino-acid chain: Pyridoxine 5'-phosphate synthase (265 aa).

Asn-6 is a binding site for 3-amino-2-oxopropyl phosphate. 1-deoxy-D-xylulose 5-phosphate is bound at residue 8–9; it reads DH. Arg-17 lines the 3-amino-2-oxopropyl phosphate pocket. The active-site Proton acceptor is His-42. 1-deoxy-D-xylulose 5-phosphate contacts are provided by Arg-44 and His-49. Glu-69 serves as the catalytic Proton acceptor. Thr-99 is a 1-deoxy-D-xylulose 5-phosphate binding site. His-213 serves as the catalytic Proton donor. 3-amino-2-oxopropyl phosphate is bound by residues Gly-214 and 235-236; that span reads GQ.

The protein belongs to the PNP synthase family. As to quaternary structure, homooctamer; tetramer of dimers.

It is found in the cytoplasm. The catalysed reaction is 3-amino-2-oxopropyl phosphate + 1-deoxy-D-xylulose 5-phosphate = pyridoxine 5'-phosphate + phosphate + 2 H2O + H(+). Its pathway is cofactor biosynthesis; pyridoxine 5'-phosphate biosynthesis; pyridoxine 5'-phosphate from D-erythrose 4-phosphate: step 5/5. Catalyzes the complicated ring closure reaction between the two acyclic compounds 1-deoxy-D-xylulose-5-phosphate (DXP) and 3-amino-2-oxopropyl phosphate (1-amino-acetone-3-phosphate or AAP) to form pyridoxine 5'-phosphate (PNP) and inorganic phosphate. This Nitratiruptor sp. (strain SB155-2) protein is Pyridoxine 5'-phosphate synthase.